The chain runs to 964 residues: Syndetin (964 aa).

Position 1 is an N-acetylmethionine (Met-1). Residues 1–25 form a disordered region; it reads MQKIKSLMTRQGLKSPPESLNDLGA. Ser-15 is subject to Phosphoserine. Coiled-coil stretches lie at residues 81 to 107 and 216 to 244; these read LNLQELEEYRDKLKQQQAAVSKKVADL and YSCISELNSKLQDTLEQIEEQLDVALSKI. Phosphoserine is present on residues Ser-494, Ser-498, Ser-559, and Ser-561. The disordered stretch occupies residues 532-563; sequence DEETEDVLASNGYESDEQEKSAYQDYDSDSDV. Lys-963 is covalently cross-linked (Glycyl lysine isopeptide (Lys-Gly) (interchain with G-Cter in SUMO1); alternate). A Glycyl lysine isopeptide (Lys-Gly) (interchain with G-Cter in SUMO2); alternate cross-link involves residue Lys-963.

It belongs to the syndetin family. In terms of assembly, component of the endosome-associated retrograde protein (EARP) complex, composed of VPS51, VPS52, VPS53 and VPS50/Syndetin. The EARP complex interacts with EIPR1. Interacts with VPS51 and VPS53 in an EIPR1-independent manner. Expressed in the brain (at protein level).

The protein resides in the recycling endosome. It localises to the membrane. Acts as a component of the EARP complex that is involved in endocytic recycling. The EARP complex associates with Rab4-positive endosomes and promotes recycling of internalized transferrin receptor (TFRC) to the plasma membrane. Within the EARP complex, required to tether the complex to recycling endosomes. Not involved in retrograde transport from early and late endosomes to the trans-Golgi network (TGN). This Rattus norvegicus (Rat) protein is Syndetin.